Consider the following 276-residue polypeptide: Protease HtpX homolog (276 aa).

A helical membrane pass occupies residues 14–34; sequence IVLFALIGQALGGTGGMLLAF. His130 contributes to the Zn(2+) binding site. Glu131 is a catalytic residue. His134 serves as a coordination point for Zn(2+). 2 consecutive transmembrane segments (helical) span residues 145–165 and 171–191; these read VAATLAGAITMLSRFALFFGG and LVSLLMMILAPMAAMLIQSAI. Glu196 lines the Zn(2+) pocket.

The protein belongs to the peptidase M48B family. Zn(2+) is required as a cofactor.

It is found in the cell inner membrane. The sequence is that of Protease HtpX homolog from Salinibacter ruber (strain DSM 13855 / M31).